The sequence spans 251 residues: Fibroblast growth factor 23 (251 aa).

A signal peptide spans 1–24 (MLGACLRLLVGALCTVCSLGTARA). The cysteines at positions 95 and 113 are disulfide-linked. Residues Thr-171 and Thr-178 are each glycosylated (O-linked (GalNAc) threonine). Residues 175 to 251 (RRHTRSAEDP…DRCRPFPRFV (77 aa)) form a disordered region. Basic and acidic residues predominate over residues 179–189 (RSAEDPPERDP). The residue at position 180 (Ser-180) is a Phosphoserine; by FAM20C.

This sequence belongs to the heparin-binding growth factors family. As to quaternary structure, interacts with FGFR1, FGFR2, FGFR3 and FGFR4. Affinity between fibroblast growth factors (FGFs) and their receptors is increased by KL and heparan sulfate glycosaminoglycans that function as coreceptors. In terms of processing, following secretion this protein is inactivated by cleavage into a N-terminal fragment and a C-terminal fragment. The processing is effected by proprotein convertases. Post-translationally, O-glycosylated at Thr-171 and Thr-178 by GALNT3 and glycosylation of Thr-178 requires previous glycosylation at Thr171. Glycosylation is necessary for secretion; it blocks processing by proprotein convertases when the O-glycan is alpha 2,6-sialylated. Competition between proprotein convertase cleavage and block of cleavage by O-glycosylation determines the level of secreted active FGF23. Phosphorylation at Ser-180 mediated by FAM20C slows down glycosylation at Thr-178 notably. As to expression, expressed in the parathyroid.

Its subcellular location is the secreted. Its function is as follows. Regulator of phosphate homeostasis. Inhibits renal tubular phosphate transport by reducing SLC34A1 levels. Regulator of vitamin-D metabolism. Negatively regulates osteoblasts differentiation and matrix mineralization. Acts directly on the parathyroid to decrease PTH secretion. Up-regulates EGR1 expression in the presence of KL. This chain is Fibroblast growth factor 23 (Fgf23), found in Rattus norvegicus (Rat).